The sequence spans 424 residues: Tyrosine--tRNA ligase (424 aa).

Tyr-37 is an L-tyrosine binding site. Positions 42–51 (PTADSLHLGH) match the 'HIGH' region motif. The residue at position 144 (Lys-144) is an N6-acetyllysine. Residues Tyr-175 and Gln-179 each contribute to the L-tyrosine site. The 'KMSKS' region signature appears at 235–239 (KFGKT). Lys-238 contributes to the ATP binding site. One can recognise an S4 RNA-binding domain in the interval 357-414 (ADLMQALVDSELQPSRGQARKTIASNAITINGEKQSDPEYFFKEEDRLFGRFTLLRRG).

The protein belongs to the class-I aminoacyl-tRNA synthetase family. TyrS type 1 subfamily. As to quaternary structure, homodimer.

Its subcellular location is the cytoplasm. It catalyses the reaction tRNA(Tyr) + L-tyrosine + ATP = L-tyrosyl-tRNA(Tyr) + AMP + diphosphate + H(+). Its function is as follows. Catalyzes the attachment of tyrosine to tRNA(Tyr) in a two-step reaction: tyrosine is first activated by ATP to form Tyr-AMP and then transferred to the acceptor end of tRNA(Tyr). This is Tyrosine--tRNA ligase from Escherichia coli (strain K12 / DH10B).